An 86-amino-acid polypeptide reads, in one-letter code: Small ribosomal subunit protein uS17 (86 aa).

The protein belongs to the universal ribosomal protein uS17 family. As to quaternary structure, part of the 30S ribosomal subunit.

Functionally, one of the primary rRNA binding proteins, it binds specifically to the 5'-end of 16S ribosomal RNA. The protein is Small ribosomal subunit protein uS17 of Bifidobacterium adolescentis (strain ATCC 15703 / DSM 20083 / NCTC 11814 / E194a).